We begin with the raw amino-acid sequence, 161 residues long: Nucleoside diphosphate kinase (161 aa).

Lys13, Phe61, Arg89, Thr95, Arg106, and Asn116 together coordinate ATP. His119 acts as the Pros-phosphohistidine intermediate in catalysis.

It belongs to the NDK family. Requires Mg(2+) as cofactor.

Its subcellular location is the cytoplasm. It catalyses the reaction a 2'-deoxyribonucleoside 5'-diphosphate + ATP = a 2'-deoxyribonucleoside 5'-triphosphate + ADP. It carries out the reaction a ribonucleoside 5'-diphosphate + ATP = a ribonucleoside 5'-triphosphate + ADP. Functionally, major role in the synthesis of nucleoside triphosphates other than ATP. The ATP gamma phosphate is transferred to the NDP beta phosphate via a ping-pong mechanism, using a phosphorylated active-site intermediate. The polypeptide is Nucleoside diphosphate kinase (Halobacterium salinarum (strain ATCC 29341 / DSM 671 / R1)).